The primary structure comprises 162 residues: NADH-quinone oxidoreductase subunit I (162 aa).

4Fe-4S ferredoxin-type domains follow at residues 52-82 (LRRY…IEAG) and 93-122 (TRYD…EGPN). [4Fe-4S] cluster is bound by residues C62, C65, C68, C72, C102, C105, C108, and C112.

It belongs to the complex I 23 kDa subunit family. NDH-1 is composed of 14 different subunits. Subunits NuoA, H, J, K, L, M, N constitute the membrane sector of the complex. Requires [4Fe-4S] cluster as cofactor.

The protein resides in the cell inner membrane. It carries out the reaction a quinone + NADH + 5 H(+)(in) = a quinol + NAD(+) + 4 H(+)(out). In terms of biological role, NDH-1 shuttles electrons from NADH, via FMN and iron-sulfur (Fe-S) centers, to quinones in the respiratory chain. The immediate electron acceptor for the enzyme in this species is believed to be ubiquinone. Couples the redox reaction to proton translocation (for every two electrons transferred, four hydrogen ions are translocated across the cytoplasmic membrane), and thus conserves the redox energy in a proton gradient. The protein is NADH-quinone oxidoreductase subunit I of Methylobacterium nodulans (strain LMG 21967 / CNCM I-2342 / ORS 2060).